Reading from the N-terminus, the 486-residue chain is Shutoff alkaline exonuclease (486 aa).

This sequence belongs to the herpesviridae alkaline nuclease family. As to quaternary structure, forms a complex with the DNA polymerase, the DNA polymerase processivity factor, and the major DNA binding protein.

Its subcellular location is the host nucleus. The protein resides in the host cytoplasm. In terms of biological role, plays a role in processing non linear or branched viral DNA intermediates in order to promote the production of mature packaged unit-length linear progeny viral DNA molecules. Exhibits endonuclease and exonuclease activities and accepts both double-stranded and single-stranded DNA as substrate. Exonuclease digestion of DNA is in the 5'-&gt; 3' direction and the products are 5'-monophosphate nucleosides. Additionally, forms a recombinase with the major DNA-binding protein, which displays strand exchange activity. Also acts as a cytoplasmic RNA endonuclease that induces degradation of the majority of the cellular messenger RNAs during early lytic infection. The resulting inhibition of cellular protein synthesis serves to ensure maximal viral gene expression and evasion from host immune response. Internally cleaves host mRNAs which are then degraded by the cellular exonuclease XRN1. Bypasses therefore the regulatory steps of deadenylation and decapping normally required for XRN1 activation. In addition, inhibits host inflammasome activation to promote viral lytic replication by interacting with host AIM2 and disrupting its polymerization. The sequence is that of Shutoff alkaline exonuclease (ORF37) from Human herpesvirus 8 type P (isolate GK18) (HHV-8).